We begin with the raw amino-acid sequence, 55 residues long: Sporulation killing factor (55 aa).

The propeptide occupies 1–29 (MKRNQKEWESVSKKGLMKPGGTSIVKAAG). A disulfide bridge connects residues Cys30 and Cys45. The segment at residues 30–55 (CMGCWASKSIAMTRVCALPHPAMRAI) is a cross-link (cyclopeptide (Cys-Ile)). Residues 33 to 41 (CWASKSIAM) constitute a cross-link (2-(S-cysteinyl)-methionine (Cys-Met)).

Post-translationally, this is a cyclic peptide. The first step in SKF maturation is probably thioether bond formation.

The protein localises to the secreted. Produces a 26-residue extracellular sporulation killing factor (SKF) that induces the lysis of other B.subtilis cells that have not entered the sporulation pathway, providing a source of nutrients to support sporulation, and at the same time delaying commitment to the energetically expensive and irreversible onset of sporulation. Can also inhibit growth of other bacteria at high concentrations. Addition of SKF to solid cultures induces killing, but it is much less effective than SDP (AC O34344). Has a role in protecting the secreted lipase LipA against proteolysis, either by modulating its folding or by acting as a protease inhibitor. The protein is Sporulation killing factor of Bacillus subtilis (strain 168).